A 229-amino-acid polypeptide reads, in one-letter code: Protein N-lysine methyltransferase METTL21D (229 aa).

N-acetylalanine is present on alanine 2. A Phosphoserine modification is found at serine 8. Residues tryptophan 43, 75–77 (GSG), aspartate 96, tryptophan 126, alanine 143, and tyrosine 148 each bind S-adenosyl-L-methionine.

It belongs to the methyltransferase superfamily. METTL21 family. As to quaternary structure, interacts with ALKBH6. Interacts with ASPSCR1 and UBXN6; interaction with ASPSCR1, but not with UBXN6, enhances VCP methylation.

It localises to the cytoplasm. The catalysed reaction is L-lysyl-[protein] + 3 S-adenosyl-L-methionine = N(6),N(6),N(6)-trimethyl-L-lysyl-[protein] + 3 S-adenosyl-L-homocysteine + 3 H(+). Its function is as follows. Protein N-lysine methyltransferase that specifically trimethylates 'Lys-315' of VCP/p97; this modification may decrease VCP ATPase activity. The protein is Protein N-lysine methyltransferase METTL21D (VCPKMT) of Homo sapiens (Human).